A 313-amino-acid chain; its full sequence is Porphobilinogen deaminase (313 aa).

Cys-242 is modified (S-(dipyrrolylmethanemethyl)cysteine).

The protein belongs to the HMBS family. In terms of assembly, monomer. It depends on dipyrromethane as a cofactor.

The catalysed reaction is 4 porphobilinogen + H2O = hydroxymethylbilane + 4 NH4(+). The protein operates within porphyrin-containing compound metabolism; protoporphyrin-IX biosynthesis; coproporphyrinogen-III from 5-aminolevulinate: step 2/4. Its function is as follows. Tetrapolymerization of the monopyrrole PBG into the hydroxymethylbilane pre-uroporphyrinogen in several discrete steps. The chain is Porphobilinogen deaminase from Shigella flexneri.